The chain runs to 465 residues: Probable dipeptidase A (465 aa).

Residue Cys-3 is part of the active site.

Belongs to the peptidase C69 family.

It carries out the reaction an L-aminoacyl-L-amino acid + H2O = 2 an L-alpha-amino acid. The polypeptide is Probable dipeptidase A (pepDA) (Streptococcus pyogenes serotype M3 (strain SSI-1)).